The chain runs to 67 residues: SPbeta prophage-derived uncharacterized protein YoqF (67 aa).

The protein is SPbeta prophage-derived uncharacterized protein YoqF (yoqF) of Bacillus subtilis (strain 168).